The sequence spans 1107 residues: Protein translocase subunit SecA (1107 aa).

Residues Gln169, 187–191 (GEGKT), and Asp688 each bind ATP. Positions 1036-1066 (RHAAEQRTDMSKYRTQKDDIEAQQKAQRDAA) are enriched in basic and acidic residues. The segment at 1036–1107 (RHAAEQRTDM…KFKQCHGRNL (72 aa)) is disordered. The Zn(2+) site is built by Cys1091, Cys1093, Cys1102, and His1103. Over residues 1097–1107 (KKFKQCHGRNL) the composition is skewed to basic residues.

It belongs to the SecA family. Monomer and homodimer. Part of the essential Sec protein translocation apparatus which comprises SecA, SecYEG and auxiliary proteins SecDF. Other proteins may also be involved. Requires Zn(2+) as cofactor.

It is found in the cell inner membrane. Its subcellular location is the cytoplasm. The catalysed reaction is ATP + H2O + cellular proteinSide 1 = ADP + phosphate + cellular proteinSide 2.. Its function is as follows. Part of the Sec protein translocase complex. Interacts with the SecYEG preprotein conducting channel. Has a central role in coupling the hydrolysis of ATP to the transfer of proteins into and across the cell membrane, serving as an ATP-driven molecular motor driving the stepwise translocation of polypeptide chains across the membrane. In Porphyromonas gingivalis (strain ATCC BAA-308 / W83), this protein is Protein translocase subunit SecA.